The chain runs to 753 residues: 5-methyltetrahydropteroyltriglutamate--homocysteine methyltransferase (753 aa).

Residues 17 to 20 (RELK) and Lys-117 contribute to the 5-methyltetrahydropteroyltri-L-glutamate site. Residues 431 to 433 (IGS) and Glu-484 each bind L-homocysteine. L-methionine is bound by residues 431 to 433 (IGS) and Glu-484. 5-methyltetrahydropteroyltri-L-glutamate-binding positions include 515–516 (RC) and Trp-561. An L-homocysteine-binding site is contributed by Asp-599. Position 599 (Asp-599) interacts with L-methionine. Glu-605 provides a ligand contact to 5-methyltetrahydropteroyltri-L-glutamate. Residues His-641, Cys-643, and Glu-665 each coordinate Zn(2+). His-694 (proton donor) is an active-site residue. Cys-726 provides a ligand contact to Zn(2+).

Belongs to the vitamin-B12 independent methionine synthase family. Requires Zn(2+) as cofactor.

It carries out the reaction 5-methyltetrahydropteroyltri-L-glutamate + L-homocysteine = tetrahydropteroyltri-L-glutamate + L-methionine. It functions in the pathway amino-acid biosynthesis; L-methionine biosynthesis via de novo pathway; L-methionine from L-homocysteine (MetE route): step 1/1. Its function is as follows. Catalyzes the transfer of a methyl group from 5-methyltetrahydrofolate to homocysteine resulting in methionine formation. This is 5-methyltetrahydropteroyltriglutamate--homocysteine methyltransferase from Shigella boydii serotype 18 (strain CDC 3083-94 / BS512).